The chain runs to 586 residues: Pectinesterase 1 (586 aa).

Positions 1–49 (MDSVNSFKGYGKVDEAQDLALKKKTRKRLLLLSISVVVLIAVIIAAVVA) are cleaved as a signal peptide. Residues Asn-57, Asn-97, Asn-154, Asn-201, and Asn-207 are each glycosylated (N-linked (GlcNAc...) asparagine). The short motif at 250–253 (RRLM) is the RRLM cleavage motif element. Positions 269–272 (RRLL) match the RRLL cleavage motif motif. Positions 355 and 385 each coordinate substrate. Asp-408 acts as the Proton donor in catalysis. A disulfide bond links Cys-422 and Cys-442. The Nucleophile role is filled by Asp-429. Asn-466 carries N-linked (GlcNAc...) asparagine glycosylation. Substrate contacts are provided by Arg-492 and Trp-494.

This sequence in the N-terminal section; belongs to the PMEI family. It in the C-terminal section; belongs to the pectinesterase family. Interacts with SBT6.1. Expressed in siliques.

Its subcellular location is the secreted. The protein resides in the cell wall. It localises to the golgi apparatus membrane. The catalysed reaction is [(1-&gt;4)-alpha-D-galacturonosyl methyl ester](n) + n H2O = [(1-&gt;4)-alpha-D-galacturonosyl](n) + n methanol + n H(+). It participates in glycan metabolism; pectin degradation; 2-dehydro-3-deoxy-D-gluconate from pectin: step 1/5. Acts in the modification of cell walls via demethylesterification of cell wall pectin. Demethylates protein phosphatase 2A (PP2A) that have been reversibly carboxymethylated by LCMT1. Acts as a negative regulators of genes involved in salt stress response. In Arabidopsis thaliana (Mouse-ear cress), this protein is Pectinesterase 1 (PME1).